Here is a 425-residue protein sequence, read N- to C-terminus: Tumor necrosis factor receptor superfamily member 16 (425 aa).

The signal sequence occupies residues 1-29; the sequence is MRRAGAACSAMDRLRLLLLLILGVSSGGA. At 30 to 253 the chain is on the extracellular side; that stretch reads KETCSTGLYT…VTRGTTDNLI (224 aa). TNFR-Cys repeat units follow at residues 32–65, 67–108, 109–147, and 149–189; these read TCST…QTVC, PCLD…DAVC, RCAY…NTVC, and ECPE…DAEC. Cystine bridges form between Cys-33–Cys-44, Cys-45–Cys-58, Cys-48–Cys-65, Cys-68–Cys-84, Cys-87–Cys-100, Cys-90–Cys-108, Cys-110–Cys-123, Cys-126–Cys-139, Cys-129–Cys-147, Cys-150–Cys-165, Cys-168–Cys-181, and Cys-171–Cys-189. 2 N-linked (GlcNAc...) asparagine glycosylation sites follow: Asn-61 and Asn-71. The interval 193–225 is disordered; that stretch reads PGRWIPRSTPPEGSDSTAPSTQEPEVPPEQDLV. Residues 206–215 are compositionally biased toward polar residues; that stretch reads SDSTAPSTQE. A helical membrane pass occupies residues 254–274; it reads PVYCSILAAVVVGLVAYIAFK. The Cytoplasmic portion of the chain corresponds to 275-425; sequence RWNSCKQNKQ…CSESTATSPV (151 aa). 2 stretches are compositionally biased toward polar residues: residues 282–292 and 306–327; these read NKQGANSRPVN and SGIS…TASG. The tract at residues 282-332 is disordered; sequence NKQGANSRPVNQTPPPEGEKLHSDSGISVDSQSLHDQQTHTQTASGQALKG. Ser-312 carries the post-translational modification Phosphoserine. A mediates interaction with KIDINS220 region spans residues 327–342; it reads GQALKGDGNLYSSLPL. Residues 354–419 form the Death domain; the sequence is GDTWRHLAGE…DIVESLCSES (66 aa).

As to quaternary structure, homodimer; disulfide-linked. Heterodimer with SORCS2. The extracellular domains of the heterodimer bind NGF. The cytoplasmic region of the heterodimer binds TRIO. NGF binding mediates dissociation of TRIO from the receptor complex. Interacts with RTN4R. Interacts with TRAF2, TRAF4 and TRAF6. Interacts with PTPN13 and RANBP9. Interacts through TRAF6 with SQSTM1 which bridges NGFR to NTRK1. Interacts with BEX1. Interacts with BEX3. Interacts with KIDINS220 and NTRK1. Can form a ternary complex with NTRK1 and KIDINS220 and this complex is affected by the expression levels of KIDINS220. An increase in KIDINS220 expression leads to a decreased association of NGFR and NTRK1. Interacts (via death domain) with RAB31. Interacts with NTRK2; may regulate the ligand specificity of the NTRK2 receptor. Interacts with LINGO1. Interacts with NRADD. Interacts with MAGED1; the interaction antagonizes the association NGFR:NTRK1. Interacts (via death domain) with ARHGDIA and RIPK2. Interacts with BFAR. Post-translationally, subject to intramembrane proteolytic cleavage by the gamma-secretase complex, giving rise to an intracellular fragment that is rapidly degraded via the proteasome. N- and O-glycosylated. In terms of processing, phosphorylated on serine residues.

It is found in the cell membrane. The protein resides in the cytoplasm. Its subcellular location is the perikaryon. The protein localises to the cell projection. It localises to the growth cone. It is found in the dendritic spine. Low affinity receptor which can bind to NGF, BDNF, NTF3, and NTF4. Forms a heterodimeric receptor with SORCS2 that binds the precursor forms of NGF, BDNF and NTF3 with high affinity, and has much lower affinity for mature NGF and BDNF. In response to proNGF binding, the heterodimeric receptor with SORCS2 activates a signaling cascade that leads to decreased Rac activity, reorganization of the actin cytoskeleton and neuronal growth cone collapse. Plays an important role in differentiation and survival of specific neuronal populations during development. Can mediate cell survival as well as cell death of neural cells. Plays a role in the inactivation of RHOA. Plays a role in the regulation of the translocation of GLUT4 to the cell surface in adipocytes and skeletal muscle cells in response to insulin, probably by regulating RAB31 activity, and thereby contributes to the regulation of insulin-dependent glucose uptake. Necessary for the circadian oscillation of the clock genes BMAL1, PER1, PER2 and NR1D1 in the suprachiasmatic nucleus (SCN) of the brain and in liver and of the genes involved in glucose and lipid metabolism in the liver. This is Tumor necrosis factor receptor superfamily member 16 (Ngfr) from Rattus norvegicus (Rat).